The following is a 629-amino-acid chain: Embryonic polyadenylate-binding protein B (629 aa).

RRM domains are found at residues 11 to 89 (ASLY…WSQR), 99 to 175 (GNVF…HFKS), 191 to 268 (TNVY…RAQK), and 294 to 370 (VNLY…LAQR). Positions 539–616 (QEPLTASLLA…AVAVLQAHQA (78 aa)) constitute a PABC domain.

The protein belongs to the polyadenylate-binding protein type-1 family. As to quaternary structure, interacts with dazl in an RNA-independent manner. The C-terminus can self-associate and also interact with the C-terminus of pabpc1, independently of RNA. RRM 1 and RRM 2 interact with both eif4g1 and paip1, and the C-terminus also interacts with paip1. Prior to oocyte maturation, found in a complex with dazl and pum2 proteins and spdy1 mRNA; pum2 dissociates from the complex during maturation. Interacts with the translation termination factor sup35/erf3.

It localises to the cytoplasm. Binds and protects the poly(A) tail of mRNA with or without an AU-rich element (ARE) and prevents mRNA deadenylation. Stimulates the translation of mRNAs to which it is bound during early development. This Xenopus laevis (African clawed frog) protein is Embryonic polyadenylate-binding protein B (epabp-b).